Reading from the N-terminus, the 218-residue chain is Stromal cell-derived factor 2-like protein (218 aa).

The first 21 residues, 1–21 (MALGFFCLAIFLYLSLDPDSG), serve as a signal peptide directing secretion. MIR domains are found at residues 34–88 (GVEI…VKPV), 96–151 (GDAV…LIIE), and 154–208 (GKTW…AAEG). N-linked (GlcNAc...) asparagine glycosylation occurs at asparagine 214.

As to quaternary structure, interacts with ERDJ3B.

The protein localises to the endoplasmic reticulum. Functionally, involved in the endoplasmic reticulum (ER) protein quality control and unfolded protein response. May be involved in the quality control of glycoproteins. Forms a complex in the ER with ERDJ3B and MED37A/BIP1 which is required for the proper accumulation and function of the surface-exposed leucine-rich repeat receptor kinases EFR involved in pathogen-associated molecular pattern (PAMP) triggered immunity. In Arabidopsis thaliana (Mouse-ear cress), this protein is Stromal cell-derived factor 2-like protein (SDF2).